We begin with the raw amino-acid sequence, 261 residues long: Leucyl/phenylalanyl-tRNA--protein transferase (261 aa).

It belongs to the L/F-transferase family.

It is found in the cytoplasm. It carries out the reaction N-terminal L-lysyl-[protein] + L-leucyl-tRNA(Leu) = N-terminal L-leucyl-L-lysyl-[protein] + tRNA(Leu) + H(+). The catalysed reaction is N-terminal L-arginyl-[protein] + L-leucyl-tRNA(Leu) = N-terminal L-leucyl-L-arginyl-[protein] + tRNA(Leu) + H(+). The enzyme catalyses L-phenylalanyl-tRNA(Phe) + an N-terminal L-alpha-aminoacyl-[protein] = an N-terminal L-phenylalanyl-L-alpha-aminoacyl-[protein] + tRNA(Phe). Functionally, functions in the N-end rule pathway of protein degradation where it conjugates Leu, Phe and, less efficiently, Met from aminoacyl-tRNAs to the N-termini of proteins containing an N-terminal arginine or lysine. This Yersinia pestis bv. Antiqua (strain Antiqua) protein is Leucyl/phenylalanyl-tRNA--protein transferase.